The primary structure comprises 688 residues: DNA ligase (688 aa).

NAD(+) is bound by residues 38 to 42, 87 to 88, and Glu118; these read DEEYD and SL. Lys120 acts as the N6-AMP-lysine intermediate in catalysis. NAD(+) contacts are provided by Arg141, Glu175, Lys291, and Lys315. Residues Cys409, Cys412, Cys428, and Cys433 each contribute to the Zn(2+) site. In terms of domain architecture, BRCT spans 590–679; sequence VKLDILRGLT…AELKGYNFDE (90 aa).

This sequence belongs to the NAD-dependent DNA ligase family. LigA subfamily. Mg(2+) is required as a cofactor. Requires Mn(2+) as cofactor.

It catalyses the reaction NAD(+) + (deoxyribonucleotide)n-3'-hydroxyl + 5'-phospho-(deoxyribonucleotide)m = (deoxyribonucleotide)n+m + AMP + beta-nicotinamide D-nucleotide.. In terms of biological role, DNA ligase that catalyzes the formation of phosphodiester linkages between 5'-phosphoryl and 3'-hydroxyl groups in double-stranded DNA using NAD as a coenzyme and as the energy source for the reaction. It is essential for DNA replication and repair of damaged DNA. This Thermotoga maritima (strain ATCC 43589 / DSM 3109 / JCM 10099 / NBRC 100826 / MSB8) protein is DNA ligase.